Consider the following 425-residue polypeptide: Serine--tRNA ligase (425 aa).

233 to 235 (TAE) contacts L-serine. 264–266 (RAE) provides a ligand contact to ATP. E287 lines the L-serine pocket. Residue 351–354 (EISS) coordinates ATP. S387 contacts L-serine.

The protein belongs to the class-II aminoacyl-tRNA synthetase family. Type-1 seryl-tRNA synthetase subfamily. As to quaternary structure, homodimer. The tRNA molecule binds across the dimer.

Its subcellular location is the cytoplasm. It catalyses the reaction tRNA(Ser) + L-serine + ATP = L-seryl-tRNA(Ser) + AMP + diphosphate + H(+). The catalysed reaction is tRNA(Sec) + L-serine + ATP = L-seryl-tRNA(Sec) + AMP + diphosphate + H(+). Its pathway is aminoacyl-tRNA biosynthesis; selenocysteinyl-tRNA(Sec) biosynthesis; L-seryl-tRNA(Sec) from L-serine and tRNA(Sec): step 1/1. Catalyzes the attachment of serine to tRNA(Ser). Is also able to aminoacylate tRNA(Sec) with serine, to form the misacylated tRNA L-seryl-tRNA(Sec), which will be further converted into selenocysteinyl-tRNA(Sec). This is Serine--tRNA ligase from Clostridium perfringens (strain SM101 / Type A).